The following is a 917-amino-acid chain: Hexokinase-2 (917 aa).

Met1 is modified (N-acetylmethionine). Residues 1-16 (MIASHLLAYFFTELNH) form a mitochondrial-binding peptide (MBP) region. 2 consecutive Hexokinase domains span residues 16 to 458 (HDQV…MVTA) and 464 to 906 (AYQH…LITA). Residues Arg30 and 84-89 (DLGGTN) each bind ATP. The interval 73 to 207 (DGTEHGEFLA…DFDIDIVAMV (135 aa)) is hexokinase small subdomain 1. 84 to 88 (DLGGT) contacts D-glucose 6-phosphate. D-glucose contacts are provided by residues 155 to 156 (SF), 172 to 173 (TK), 208 to 209 (ND), Asn235, Glu260, and 291 to 294 (QLFE). The segment at 208-447 (NDTVATMMTC…CDIRFLCSED (240 aa)) is hexokinase large subdomain 1. Asp209 serves as a coordination point for D-glucose 6-phosphate. 413–415 (DGS) serves as a coordination point for D-glucose 6-phosphate. 425–426 (KR) lines the ATP pocket. Residues Ser449 and 532-536 (DLGGT) each bind D-glucose 6-phosphate. Residues 521-655 (DGTEKGDFLA…EFDLDVVAVV (135 aa)) are hexokinase small subdomain 2. 532-537 (DLGGTN) serves as a coordination point for ATP. D-glucose contacts are provided by residues 603-604 (SF), 620-621 (TK), and 656-657 (ND). The interval 656–895 (NDTVGTMMTC…CDVSFLESED (240 aa)) is hexokinase large subdomain 2. Residues Asp657 and Thr680 each coordinate D-glucose 6-phosphate. Position 680 (Thr680) interacts with ATP. D-glucose is bound by residues 682–683 (SN), Glu708, and 739–742 (QRFE). ATP contacts are provided by residues 747–748 (GM), 784–788 (TKFLS), and 863–867 (TLYKL). D-glucose 6-phosphate contacts are provided by residues 861-863 (DGT) and Ser897.

The protein belongs to the hexokinase family. As to quaternary structure, monomer. Interacts with TIGAR; the interaction increases hexokinase activity in a hypoxia- and HIF1A-dependent manner.

The protein localises to the mitochondrion outer membrane. The protein resides in the cytoplasm. It is found in the cytosol. The catalysed reaction is a D-hexose + ATP = a D-hexose 6-phosphate + ADP + H(+). It catalyses the reaction D-fructose + ATP = D-fructose 6-phosphate + ADP + H(+). The enzyme catalyses D-glucose + ATP = D-glucose 6-phosphate + ADP + H(+). It functions in the pathway carbohydrate metabolism; hexose metabolism. The protein operates within carbohydrate degradation; glycolysis; D-glyceraldehyde 3-phosphate and glycerone phosphate from D-glucose: step 1/4. Its activity is regulated as follows. Hexokinase activity is specifically inhibited by 2,6-disubstituted glucosamines. Its function is as follows. Catalyzes the phosphorylation of hexose, such as D-glucose and D-fructose, to hexose 6-phosphate (D-glucose 6-phosphate and D-fructose 6-phosphate, respectively). Mediates the initial step of glycolysis by catalyzing phosphorylation of D-glucose to D-glucose 6-phosphate. Plays a key role in maintaining the integrity of the outer mitochondrial membrane by preventing the release of apoptogenic molecules from the intermembrane space and subsequent apoptosis. This is Hexokinase-2 from Equus zebra (Mountain zebra).